A 142-amino-acid polypeptide reads, in one-letter code: Pre-mRNA-splicing factor cwf18 (142 aa).

Residues 24–45 (LENKTRDSQEVQKNVIEHRNYD) are compositionally biased toward basic and acidic residues. The interval 24–54 (LENKTRDSQEVQKNVIEHRNYDPEVQAPKMG) is disordered.

In terms of assembly, belongs to the 40S cdc5-associated complex (or cwf complex), a spliceosome sub-complex reminiscent of a late-stage spliceosome composed of the U2, U5 and U6 snRNAs and at least brr2, cdc5, cwf2/prp3, cwf3/syf1, cwf4/syf3, cwf5/ecm2, spp42/cwf6, cwf7/spf27, cwf8, cwf9, cwf10, cwf11, cwf12, prp45/cwf13, cwf14, cwf15, cwf16, cwf17, cwf18, cwf19, cwf20, cwf21, cwf22, cwf23, cwf24, cwf25, cwf26, cyp7/cwf27, cwf28, cwf29/ist3, lea1, msl1, prp5/cwf1, prp10, prp12/sap130, prp17, prp22, sap61, sap62, sap114, sap145, slu7, smb1, smd1, smd3, smf1, smg1 and syf2.

It is found in the nucleus. Its function is as follows. Involved in mRNA splicing where it associates with cdc5 and the other cwf proteins as part of the spliceosome. This is Pre-mRNA-splicing factor cwf18 (cwf18) from Schizosaccharomyces pombe (strain 972 / ATCC 24843) (Fission yeast).